Consider the following 444-residue polypeptide: Pestheic acid cluster transcriptional regulator 2 (444 aa).

Over residues Met1 to Pro22 the composition is skewed to polar residues. The interval Met1–Lys31 is disordered. The zn(2)-C6 fungal-type DNA-binding region spans Cys36 to Cys63. Residues Ala326–Gln348 form a disordered region. The span at Gly331–Gln348 shows a compositional bias: polar residues.

The protein localises to the nucleus. Its function is as follows. Transcription factor that, with ptaR1 and ptaR3, coregulates the expression of the gene cluster that mediates the biosynthesis of pestheic acid, a diphenyl ether which is a biosynthetic precursor of the unique chloropupukeananes. In Pestalotiopsis fici (strain W106-1 / CGMCC3.15140), this protein is Pestheic acid cluster transcriptional regulator 2.